We begin with the raw amino-acid sequence, 299 residues long: MDLSELERDNTGRCRLSSPVPAVCRKEPCVLGVDEAGRGPVLGPMVYAICYCPLPRLADLEALKVADSKTLLESERERLFAKMEDTDFVGWALDVLSPNLISTSMLGRVKYNLNSLSHDTATGLIQYALDQGVNVTQVFVDTVGMPETYQARLQQSFPGIEVTVKAKADALYPVVSAASICAKVARDQAVKKWQFVEKLQDLDTDYGSGYPNDPKTKAWLKEHVEPVFGFPQFVRFSWRTAQTILEKEAEDVIWEDSASENQEGLRKITSYFLNEGSQARPRSSHRYFLERGLESATSL.

An N-acetylmethionine modification is found at methionine 1. The RNase H type-2 domain occupies 28–250 (PCVLGVDEAG…AQTILEKEAE (223 aa)). 3 residues coordinate a divalent metal cation: aspartate 34, glutamate 35, and aspartate 141. Phosphothreonine is present on residues threonine 204 and threonine 216. A phosphoserine mark is found at serine 257 and serine 277.

This sequence belongs to the RNase HII family. Eukaryotic subfamily. In terms of assembly, the RNase H2 complex is a heterotrimer composed of the catalytic subunit RNASEH2A and the non-catalytic subunits RNASEH2B and RNASEH2C. It depends on Mn(2+) as a cofactor. Requires Mg(2+) as cofactor.

It is found in the nucleus. It carries out the reaction Endonucleolytic cleavage to 5'-phosphomonoester.. Functionally, catalytic subunit of RNase HII, an endonuclease that specifically degrades the RNA of RNA:DNA hybrids. Participates in DNA replication, possibly by mediating the removal of lagging-strand Okazaki fragment RNA primers during DNA replication. Mediates the excision of single ribonucleotides from DNA:RNA duplexes. The sequence is that of Ribonuclease H2 subunit A (RNASEH2A) from Homo sapiens (Human).